We begin with the raw amino-acid sequence, 317 residues long: Ribosomal protein L11 methyltransferase (317 aa).

S-adenosyl-L-methionine-binding residues include T139, G162, D184, and N226. The disordered stretch occupies residues 274–297 (EHVATRPDPASPGGDRRAGRGDAG).

The protein belongs to the methyltransferase superfamily. PrmA family.

Its subcellular location is the cytoplasm. The catalysed reaction is L-lysyl-[protein] + 3 S-adenosyl-L-methionine = N(6),N(6),N(6)-trimethyl-L-lysyl-[protein] + 3 S-adenosyl-L-homocysteine + 3 H(+). Its function is as follows. Methylates ribosomal protein L11. The chain is Ribosomal protein L11 methyltransferase from Sorangium cellulosum (strain So ce56) (Polyangium cellulosum (strain So ce56)).